The primary structure comprises 433 residues: Histidinol dehydrogenase 2 (433 aa).

Residues Tyr130, Gln192, and Asn215 each coordinate NAD(+). Substrate contacts are provided by Ser238, Gln260, and His263. Gln260 and His263 together coordinate Zn(2+). Active-site proton acceptor residues include Glu328 and His329. Substrate is bound by residues His329, Asp362, Glu416, and His421. Zn(2+) is bound at residue Asp362. Position 421 (His421) interacts with Zn(2+).

This sequence belongs to the histidinol dehydrogenase family. The cofactor is Zn(2+).

It catalyses the reaction L-histidinol + 2 NAD(+) + H2O = L-histidine + 2 NADH + 3 H(+). The protein operates within amino-acid biosynthesis; L-histidine biosynthesis; L-histidine from 5-phospho-alpha-D-ribose 1-diphosphate: step 9/9. Functionally, catalyzes the sequential NAD-dependent oxidations of L-histidinol to L-histidinaldehyde and then to L-histidine. This is Histidinol dehydrogenase 2 from Trichormus variabilis (strain ATCC 29413 / PCC 7937) (Anabaena variabilis).